The chain runs to 251 residues: Adenosylcobinamide-GDP ribazoletransferase (251 aa).

A run of 7 helical transmembrane segments spans residues 36 to 56, 60 to 80, 110 to 130, 141 to 161, 181 to 201, 202 to 222, and 231 to 251; these read LYPF…FVLS, VPIM…TGFL, VGAF…AGMF, VLIF…VSQE, EIIL…TLGI, NYLI…LKVK, and DVAG…LGII.

Belongs to the CobS family. It depends on Mg(2+) as a cofactor.

The protein localises to the cell membrane. It catalyses the reaction alpha-ribazole + adenosylcob(III)inamide-GDP = adenosylcob(III)alamin + GMP + H(+). It carries out the reaction alpha-ribazole 5'-phosphate + adenosylcob(III)inamide-GDP = adenosylcob(III)alamin 5'-phosphate + GMP + H(+). It functions in the pathway cofactor biosynthesis; adenosylcobalamin biosynthesis; adenosylcobalamin from cob(II)yrinate a,c-diamide: step 7/7. In terms of biological role, joins adenosylcobinamide-GDP and alpha-ribazole to generate adenosylcobalamin (Ado-cobalamin). Also synthesizes adenosylcobalamin 5'-phosphate from adenosylcobinamide-GDP and alpha-ribazole 5'-phosphate. The polypeptide is Adenosylcobinamide-GDP ribazoletransferase (Clostridium perfringens (strain 13 / Type A)).